Here is a 329-residue protein sequence, read N- to C-terminus: Phosphoenolpyruvate transferase (329 aa).

Residue Asp61 coordinates 7,8-didemethyl-8-hydroxy-5-deazariboflavin.

Belongs to the CofD family. In terms of assembly, homodimer. Mg(2+) serves as cofactor.

It carries out the reaction enolpyruvoyl-2-diphospho-5'-guanosine + 7,8-didemethyl-8-hydroxy-5-deazariboflavin = dehydro coenzyme F420-0 + GMP + H(+). Its pathway is cofactor biosynthesis; coenzyme F420 biosynthesis. Its function is as follows. Catalyzes the transfer of the phosphoenolpyruvate moiety from enoylpyruvoyl-2-diphospho-5'-guanosine (EPPG) to 7,8-didemethyl-8-hydroxy-5-deazariboflavin (FO) with the formation of dehydro coenzyme F420-0 and GMP. In Mycobacterium ulcerans (strain Agy99), this protein is Phosphoenolpyruvate transferase.